Here is a 93-residue protein sequence, read N- to C-terminus: UPF0147 protein MJ1419 (93 aa).

Belongs to the UPF0147 family.

The protein is UPF0147 protein MJ1419 of Methanocaldococcus jannaschii (strain ATCC 43067 / DSM 2661 / JAL-1 / JCM 10045 / NBRC 100440) (Methanococcus jannaschii).